We begin with the raw amino-acid sequence, 337 residues long: Tryptophan--tRNA ligase (337 aa).

ATP-binding positions include 11 to 13 and 19 to 20; these read QPT and GN. The short motif at 12–20 is the 'HIGH' region element; the sequence is PTGNLHLGN. Residue D135 coordinates L-tryptophan. Residues 147-149, V190, and 199-203 each bind ATP; these read GED and KMSKS. Residues 199–203 carry the 'KMSKS' region motif; that stretch reads KMSKS.

The protein belongs to the class-I aminoacyl-tRNA synthetase family. As to quaternary structure, homodimer.

It localises to the cytoplasm. The enzyme catalyses tRNA(Trp) + L-tryptophan + ATP = L-tryptophyl-tRNA(Trp) + AMP + diphosphate + H(+). In terms of biological role, catalyzes the attachment of tryptophan to tRNA(Trp). This Synechocystis sp. (strain ATCC 27184 / PCC 6803 / Kazusa) protein is Tryptophan--tRNA ligase.